We begin with the raw amino-acid sequence, 189 residues long: NADH-quinone oxidoreductase subunit B (189 aa).

[4Fe-4S] cluster is bound by residues Cys39, Cys40, Cys104, and Cys135.

This sequence belongs to the complex I 20 kDa subunit family. In terms of assembly, NDH-1 is composed of 14 different subunits. Subunits NuoB, C, D, E, F, and G constitute the peripheral sector of the complex. Requires [4Fe-4S] cluster as cofactor.

Its subcellular location is the cell inner membrane. The catalysed reaction is a quinone + NADH + 5 H(+)(in) = a quinol + NAD(+) + 4 H(+)(out). NDH-1 shuttles electrons from NADH, via FMN and iron-sulfur (Fe-S) centers, to quinones in the respiratory chain. The immediate electron acceptor for the enzyme in this species is believed to be a menaquinone. Couples the redox reaction to proton translocation (for every two electrons transferred, four hydrogen ions are translocated across the cytoplasmic membrane), and thus conserves the redox energy in a proton gradient. In Chlorobaculum parvum (strain DSM 263 / NCIMB 8327) (Chlorobium vibrioforme subsp. thiosulfatophilum), this protein is NADH-quinone oxidoreductase subunit B.